Here is a 259-residue protein sequence, read N- to C-terminus: Type III pantothenate kinase (259 aa).

6–13 (DVGNTNIV) is an ATP binding site. Substrate-binding positions include Tyr-100 and 107–110 (GADR). Asp-109 (proton acceptor) is an active-site residue. Position 129 (Asp-129) interacts with K(+). Residue Thr-132 participates in ATP binding. Position 184 (Thr-184) interacts with substrate.

The protein belongs to the type III pantothenate kinase family. As to quaternary structure, homodimer. Requires NH4(+) as cofactor. K(+) serves as cofactor.

It is found in the cytoplasm. It catalyses the reaction (R)-pantothenate + ATP = (R)-4'-phosphopantothenate + ADP + H(+). It participates in cofactor biosynthesis; coenzyme A biosynthesis; CoA from (R)-pantothenate: step 1/5. Catalyzes the phosphorylation of pantothenate (Pan), the first step in CoA biosynthesis. This Clostridium perfringens (strain 13 / Type A) protein is Type III pantothenate kinase.